The following is a 463-amino-acid chain: Elongation factor 1-alpha (463 aa).

Positions 5-242 (KTHINIVVIG…DAILPPARPT (238 aa)) constitute a tr-type G domain. The tract at residues 14-21 (GHVDSGKS) is G1. 14–21 (GHVDSGKS) contributes to the GTP binding site. The segment at 70-74 (GITID) is G2. The segment at 91-94 (DAPG) is G3. Residues 91 to 95 (DAPGH) and 153 to 156 (NKMD) each bind GTP. Positions 153-156 (NKMD) are G4. Residues 194–196 (SGW) are G5. Glutamate 301 and glutamate 374 each carry 5-glutamyl glycerylphosphorylethanolamine.

It belongs to the TRAFAC class translation factor GTPase superfamily. Classic translation factor GTPase family. EF-Tu/EF-1A subfamily.

Its subcellular location is the cytoplasm. Its function is as follows. This protein promotes the GTP-dependent binding of aminoacyl-tRNA to the A-site of ribosomes during protein biosynthesis. This chain is Elongation factor 1-alpha, found in Bombyx mori (Silk moth).